Reading from the N-terminus, the 600-residue chain is UvrABC system protein C (600 aa).

The region spanning 15–100 (NSAGVYEYFN…IKQLHPKYNI (86 aa)) is the GIY-YIG domain. Positions 203 to 238 (SVLLKNLEKQMLVLAQNENYEEAAKIRDQIATIKDL) constitute a UVR domain.

It belongs to the UvrC family. Interacts with UvrB in an incision complex.

The protein localises to the cytoplasm. The UvrABC repair system catalyzes the recognition and processing of DNA lesions. UvrC both incises the 5' and 3' sides of the lesion. The N-terminal half is responsible for the 3' incision and the C-terminal half is responsible for the 5' incision. The chain is UvrABC system protein C from Campylobacter jejuni subsp. doylei (strain ATCC BAA-1458 / RM4099 / 269.97).